Reading from the N-terminus, the 277-residue chain is MELIEKHASFGGWQNVYRHYSQSLKCEMNVGVYLPPKAENEKLPVLYWLSGLTCNEQNFITKSGMQRYAAEHNIIVVAPDTSPRGSHVADADRYDLGQGAGFYLNATQAPWNEHYKMYDYIRNELPNLVMHHFPATARKSISGHSMGGLGALVLALRNPDEYASVSAFSPIVSPSQVPWGQQAFAAYLGENKDAWLDYDPVSLISQGQRVAEIMVDQGLSDDFYAEQLRTPNLEKICQEMNIKTLIRYHEGYDHSYYFVSSFIGEHIAYHANKLNMR.

Active-site charge relay system residues include S145, D221, and H254.

This sequence belongs to the esterase D family.

It catalyses the reaction S-formylglutathione + H2O = formate + glutathione + H(+). In terms of biological role, serine hydrolase involved in the detoxification of formaldehyde. Hydrolyzes S-formylglutathione to glutathione and formate. The chain is S-formylglutathione hydrolase FrmB (frmB) from Escherichia coli O6:K15:H31 (strain 536 / UPEC).